A 442-amino-acid polypeptide reads, in one-letter code: Limonoid 1-O-acetyltransferse (442 aa).

Residues His155 and Asp381 each act as proton acceptor in the active site.

Belongs to the plant acyltransferase family. In terms of assembly, monomer.

The catalysed reaction is (1S)-1-hydroxy-luvungin A + acetyl-CoA = (1S)-1-acetoxy-luvungin A + CoA. The protein operates within secondary metabolite biosynthesis; terpenoid biosynthesis. Its function is as follows. Acetyltransferase involved in the biosynthesis of limonoids triterpene natural products such as limonin, a compound with insecticidal activity responsible for the bitter taste in citrus. Catalyzes the formation of (1S)-1-acetoxy-luvungin A from (1S)-1-hydroxy-luvungin A. The chain is Limonoid 1-O-acetyltransferse from Citrus sinensis (Sweet orange).